Consider the following 130-residue polypeptide: Holo-[acyl-carrier-protein] synthase (130 aa).

Positions 8 and 62 each coordinate Mg(2+).

Belongs to the P-Pant transferase superfamily. AcpS family. Requires Mg(2+) as cofactor.

The protein localises to the cytoplasm. It carries out the reaction apo-[ACP] + CoA = holo-[ACP] + adenosine 3',5'-bisphosphate + H(+). In terms of biological role, transfers the 4'-phosphopantetheine moiety from coenzyme A to a Ser of acyl-carrier-protein. In Acidovorax ebreus (strain TPSY) (Diaphorobacter sp. (strain TPSY)), this protein is Holo-[acyl-carrier-protein] synthase.